The sequence spans 153 residues: GYKAKQGYVIYRIRVRRGGRKRPVPKGATYGKPVHHGVNQLKFARSLQSVXEERAGRHCGALRVLNSYWVGEDSTYKFFEVILIDPFHKAIRRNPDTQWITKPVHKHREMRGLTSAGRKSRGLGKGHKFHHTIGGSRRAAWRRRNTLQLHRYR.

Lysine 32 is covalently cross-linked (Glycyl lysine isopeptide (Lys-Gly) (interchain with G-Cter in SUMO2)). Phosphoserine occurs at positions 46 and 49. Residues 114 to 135 form a disordered region; that stretch reads TSAGRKSRGLGKGHKFHHTIGG. The segment covering 118–131 has biased composition (basic residues); the sequence is RKSRGLGKGHKFHH.

It belongs to the eukaryotic ribosomal protein eL15 family. Component of the large ribosomal subunit. Interacts with IFIT1 (via TPR repeats 1-4).

The protein localises to the cytoplasm. Functionally, component of the large ribosomal subunit. The ribosome is a large ribonucleoprotein complex responsible for the synthesis of proteins in the cell. In Sus scrofa (Pig), this protein is Large ribosomal subunit protein eL15 (RPL15).